Consider the following 269-residue polypeptide: NAD kinase (269 aa).

The active-site Proton acceptor is Asp-45. NAD(+) is bound by residues 45-46 (DG), 121-122 (NE), Arg-147, Asp-149, 160-165 (TAYNRS), and Ala-184.

The protein belongs to the NAD kinase family. A divalent metal cation is required as a cofactor.

The protein resides in the cytoplasm. The catalysed reaction is NAD(+) + ATP = ADP + NADP(+) + H(+). Involved in the regulation of the intracellular balance of NAD and NADP, and is a key enzyme in the biosynthesis of NADP. Catalyzes specifically the phosphorylation on 2'-hydroxyl of the adenosine moiety of NAD to yield NADP. This Pediococcus pentosaceus (strain ATCC 25745 / CCUG 21536 / LMG 10740 / 183-1w) protein is NAD kinase.